The chain runs to 90 residues: Putative membrane protein insertion efficiency factor (90 aa).

It belongs to the UPF0161 family.

The protein resides in the cell inner membrane. Its function is as follows. Could be involved in insertion of integral membrane proteins into the membrane. This is Putative membrane protein insertion efficiency factor from Thermosynechococcus vestitus (strain NIES-2133 / IAM M-273 / BP-1).